Here is a 465-residue protein sequence, read N- to C-terminus: Probable M18 family aminopeptidase 1 (465 aa).

Zn(2+) contacts are provided by His-105, His-180, and His-441.

Belongs to the peptidase M18 family. Requires Zn(2+) as cofactor.

This Clostridium acetobutylicum (strain ATCC 824 / DSM 792 / JCM 1419 / IAM 19013 / LMG 5710 / NBRC 13948 / NRRL B-527 / VKM B-1787 / 2291 / W) protein is Probable M18 family aminopeptidase 1 (apeA).